The chain runs to 122 residues: Large ribosomal subunit protein uL14 (122 aa).

It belongs to the universal ribosomal protein uL14 family. In terms of assembly, part of the 50S ribosomal subunit. Forms a cluster with proteins L3 and L19. In the 70S ribosome, L14 and L19 interact and together make contacts with the 16S rRNA in bridges B5 and B8.

Binds to 23S rRNA. Forms part of two intersubunit bridges in the 70S ribosome. This chain is Large ribosomal subunit protein uL14, found in Mycobacteroides abscessus (strain ATCC 19977 / DSM 44196 / CCUG 20993 / CIP 104536 / JCM 13569 / NCTC 13031 / TMC 1543 / L948) (Mycobacterium abscessus).